The primary structure comprises 378 residues: Queuine tRNA-ribosyltransferase (378 aa).

D91 acts as the Proton acceptor in catalysis. Substrate is bound by residues 91-95 (DSGGF), D145, Q189, and G216. Positions 247-253 (GVGKPED) are RNA binding. D266 (nucleophile) is an active-site residue. Residues 271 to 275 (TRNAR) are RNA binding; important for wobble base 34 recognition. Positions 304, 306, 309, and 335 each coordinate Zn(2+).

This sequence belongs to the queuine tRNA-ribosyltransferase family. Homodimer. Within each dimer, one monomer is responsible for RNA recognition and catalysis, while the other monomer binds to the replacement base PreQ1. Zn(2+) is required as a cofactor.

It carries out the reaction 7-aminomethyl-7-carbaguanine + guanosine(34) in tRNA = 7-aminomethyl-7-carbaguanosine(34) in tRNA + guanine. It functions in the pathway tRNA modification; tRNA-queuosine biosynthesis. Functionally, catalyzes the base-exchange of a guanine (G) residue with the queuine precursor 7-aminomethyl-7-deazaguanine (PreQ1) at position 34 (anticodon wobble position) in tRNAs with GU(N) anticodons (tRNA-Asp, -Asn, -His and -Tyr). Catalysis occurs through a double-displacement mechanism. The nucleophile active site attacks the C1' of nucleotide 34 to detach the guanine base from the RNA, forming a covalent enzyme-RNA intermediate. The proton acceptor active site deprotonates the incoming PreQ1, allowing a nucleophilic attack on the C1' of the ribose to form the product. After dissociation, two additional enzymatic reactions on the tRNA convert PreQ1 to queuine (Q), resulting in the hypermodified nucleoside queuosine (7-(((4,5-cis-dihydroxy-2-cyclopenten-1-yl)amino)methyl)-7-deazaguanosine). The chain is Queuine tRNA-ribosyltransferase from Vibrio campbellii (strain ATCC BAA-1116).